The sequence spans 139 residues: D-ribose pyranase (139 aa).

Residue His-20 is the Proton donor of the active site. Substrate-binding positions include Asp-28, His-106, and Tyr-128–Asn-130.

It belongs to the RbsD / FucU family. RbsD subfamily. As to quaternary structure, homodecamer.

Its subcellular location is the cytoplasm. It carries out the reaction beta-D-ribopyranose = beta-D-ribofuranose. It participates in carbohydrate metabolism; D-ribose degradation; D-ribose 5-phosphate from beta-D-ribopyranose: step 1/2. Functionally, catalyzes the interconversion of beta-pyran and beta-furan forms of D-ribose. This is D-ribose pyranase from Haemophilus influenzae (strain 86-028NP).